The following is a 489-amino-acid chain: Putative ABC transporter ATP-binding protein TDE_0282 (489 aa).

2 consecutive ABC transporter domains span residues 2-241 (ITLR…SMKL) and 269-487 (FAVK…MQLE). Residues 36–43 (GASGCGKT) and 301–308 (GENGAGKT) contribute to the ATP site.

This sequence belongs to the ABC transporter superfamily.

Its subcellular location is the cell inner membrane. In terms of biological role, probably part of an ABC transporter complex. Responsible for energy coupling to the transport system. This chain is Putative ABC transporter ATP-binding protein TDE_0282, found in Treponema denticola (strain ATCC 35405 / DSM 14222 / CIP 103919 / JCM 8153 / KCTC 15104).